Reading from the N-terminus, the 1687-residue chain is A-kinase anchor protein SPHKAP (1687 aa).

The segment covering 1-14 (MDVNSRLSVQSNVE) has biased composition (polar residues). Disordered stretches follow at residues 1–25 (MDVN…PEPQ) and 272–293 (RKHR…ENTS). Residues 914–931 (FAEELAETVVSMATEIAA) form a PKA-RII subunit binding domain region. Positions 964-989 (LKRKKENSSAGSTVRKHKPPRLSEIK) are disordered. Phosphoserine is present on residues serine 1010, serine 1070, serine 1092, serine 1105, serine 1106, serine 1109, serine 1244, and serine 1273. 2 disordered regions span residues 1363–1406 (VTEG…SPRR) and 1421–1520 (DQKE…PDDT). Residues 1366–1375 (GNHSPVSSPG) are compositionally biased toward polar residues. Residues 1382–1393 (KPSDFDPRRETS) show a composition bias toward basic and acidic residues. Over residues 1461-1470 (TAPSTCQSSR) the composition is skewed to polar residues. Positions 1482–1494 (EVLKEDIPRDESR) are enriched in basic and acidic residues. Positions 1495 to 1508 (NPPSSSEESTGSWS) are enriched in low complexity.

Belongs to the AKAP110 family. Interacts (via the PKA-RII subunit binding domain) with the RI subunit of PKA. Interacts with SPHK1; the interaction greatly reduces SPHK1 activity.

It localises to the cytoplasm. Anchoring protein that binds preferentially to the type I regulatory subunit of c-AMP-dependent protein kinase (PKA type I) and targets it to distinct subcellular compartments. May act as a converging factor linking cAMP and sphingosine signaling pathways. Plays a regulatory role in the modulation of SPHK1. The sequence is that of A-kinase anchor protein SPHKAP (Sphkap) from Mus musculus (Mouse).